Here is a 436-residue protein sequence, read N- to C-terminus: Enolase (436 aa).

A (2R)-2-phosphoglycerate-binding site is contributed by glutamine 167. The active-site Proton donor is glutamate 209. Positions 246, 291, and 318 each coordinate Mg(2+). Residues lysine 343, arginine 372, serine 373, and lysine 394 each coordinate (2R)-2-phosphoglycerate. Lysine 343 functions as the Proton acceptor in the catalytic mechanism.

It belongs to the enolase family. Component of the RNA degradosome, a multiprotein complex involved in RNA processing and mRNA degradation. Mg(2+) serves as cofactor.

Its subcellular location is the cytoplasm. The protein localises to the secreted. It localises to the cell surface. It carries out the reaction (2R)-2-phosphoglycerate = phosphoenolpyruvate + H2O. It functions in the pathway carbohydrate degradation; glycolysis; pyruvate from D-glyceraldehyde 3-phosphate: step 4/5. Functionally, catalyzes the reversible conversion of 2-phosphoglycerate (2-PG) into phosphoenolpyruvate (PEP). It is essential for the degradation of carbohydrates via glycolysis. The sequence is that of Enolase from Actinobacillus pleuropneumoniae serotype 5b (strain L20).